The following is a 204-amino-acid chain: MSKRSATVERNTLETQIQATINLDGTGQCTLDTGLPFLEHMLDQVARHGLVDLDIKAKGDLHIDAHHTVEDIGITLGQAFAKAVGDKKGVRRYGHAYVPLDEALSRVVLDLSGRPGLEMFVEFTRGSIGGFDVDLFYEFFQGFVNHAMITLHIDNLRGKNAHHQAETVFKAFGRALRMAVEPDPRMDGITPSTKGTLSESGDSQ.

The segment at 183 to 204 is disordered; sequence DPRMDGITPSTKGTLSESGDSQ. Positions 190 to 204 are enriched in polar residues; sequence TPSTKGTLSESGDSQ.

Belongs to the imidazoleglycerol-phosphate dehydratase family.

It localises to the cytoplasm. The catalysed reaction is D-erythro-1-(imidazol-4-yl)glycerol 3-phosphate = 3-(imidazol-4-yl)-2-oxopropyl phosphate + H2O. The protein operates within amino-acid biosynthesis; L-histidine biosynthesis; L-histidine from 5-phospho-alpha-D-ribose 1-diphosphate: step 6/9. The sequence is that of Imidazoleglycerol-phosphate dehydratase from Alcanivorax borkumensis (strain ATCC 700651 / DSM 11573 / NCIMB 13689 / SK2).